Reading from the N-terminus, the 262-residue chain is Small ribosomal subunit protein uS2 (262 aa).

The tract at residues 223–262 (KSLLEQDGGEQAAGEEVSQDEKDAVVAEAMSEEDFGEDEE) is disordered. The span at 227 to 238 (EQDGGEQAAGEE) shows a compositional bias: low complexity. A compositionally biased stretch (acidic residues) spans 252–262 (MSEEDFGEDEE).

This sequence belongs to the universal ribosomal protein uS2 family.

This Campylobacter concisus (strain 13826) protein is Small ribosomal subunit protein uS2.